The chain runs to 217 residues: Large ribosomal subunit protein uL4 (217 aa).

A disordered region spans residues 58–90 (TAATKGRSDVSGGGKKPWRQKGTGRARSGTSRS).

Belongs to the universal ribosomal protein uL4 family. As to quaternary structure, part of the 50S ribosomal subunit.

Functionally, one of the primary rRNA binding proteins, this protein initially binds near the 5'-end of the 23S rRNA. It is important during the early stages of 50S assembly. It makes multiple contacts with different domains of the 23S rRNA in the assembled 50S subunit and ribosome. Its function is as follows. Forms part of the polypeptide exit tunnel. The sequence is that of Large ribosomal subunit protein uL4 from Syntrophus aciditrophicus (strain SB).